The following is a 547-amino-acid chain: Glucose-6-phosphate isomerase (547 aa).

The active-site Proton donor is the Glu-351. Residues His-382 and Lys-509 contribute to the active site.

Belongs to the GPI family.

It localises to the cytoplasm. It carries out the reaction alpha-D-glucose 6-phosphate = beta-D-fructose 6-phosphate. Its pathway is carbohydrate biosynthesis; gluconeogenesis. It functions in the pathway carbohydrate degradation; glycolysis; D-glyceraldehyde 3-phosphate and glycerone phosphate from D-glucose: step 2/4. Its function is as follows. Catalyzes the reversible isomerization of glucose-6-phosphate to fructose-6-phosphate. This is Glucose-6-phosphate isomerase from Coxiella burnetii (strain Dugway 5J108-111).